We begin with the raw amino-acid sequence, 184 residues long: Dynactin subunit 6 (184 aa).

This sequence belongs to the dynactin subunits 5/6 family. Dynactin subunit 6 subfamily. As to quaternary structure, subunit of dynactin, a multiprotein complex part of a tripartite complex with dynein and a adapter, such as BICDL1, BICD2 or HOOK3. The dynactin complex is built around ACTR1A/ACTB filament and consists of an actin-related filament composed of a shoulder domain, a pointed end and a barbed end.

Its subcellular location is the cytoplasm. It is found in the cytoskeleton. Functionally, part of the dynactin complex that activates the molecular motor dynein for ultra-processive transport along microtubules. The polypeptide is Dynactin subunit 6 (dctn6) (Nematostella vectensis (Starlet sea anemone)).